The primary structure comprises 676 residues: DNA ligase (676 aa).

Residues 32–36 (DAEYD), 81–82 (SL), and glutamate 113 each bind NAD(+). Lysine 115 acts as the N6-AMP-lysine intermediate in catalysis. Positions 136, 173, 291, and 315 each coordinate NAD(+). Residues cysteine 409, cysteine 412, cysteine 427, and cysteine 433 each contribute to the Zn(2+) site. In terms of domain architecture, BRCT spans 595–676 (SEKTYFFNKK…LNSLIRIKEQ (82 aa)).

The protein belongs to the NAD-dependent DNA ligase family. LigA subfamily. The cofactor is Mg(2+). It depends on Mn(2+) as a cofactor.

The catalysed reaction is NAD(+) + (deoxyribonucleotide)n-3'-hydroxyl + 5'-phospho-(deoxyribonucleotide)m = (deoxyribonucleotide)n+m + AMP + beta-nicotinamide D-nucleotide.. DNA ligase that catalyzes the formation of phosphodiester linkages between 5'-phosphoryl and 3'-hydroxyl groups in double-stranded DNA using NAD as a coenzyme and as the energy source for the reaction. It is essential for DNA replication and repair of damaged DNA. This is DNA ligase from Buchnera aphidicola subsp. Acyrthosiphon pisum (strain Tuc7).